A 926-amino-acid chain; its full sequence is Armadillo repeat-containing protein 5 (926 aa).

Low complexity predominate over residues 82–104 (PAPSQAASGSAPSSVASAGSTPG). The segment at 82–111 (PAPSQAASGSAPSSVASAGSTPGHAPAAES) is disordered. ARM repeat units follow at residues 139–179 (GACR…NLAM), 181–221 (PESC…NLAD), 223–263 (PQHR…ELSR), 267–306 (RACA…NLCA), 307–354 (QGLV…LCRE), 355–399 (AINR…DTGA), and 401–440 (GKLQ…EERT). A Phosphoserine modification is found at Ser-337. Residues 472-516 (WSPERCPMPEPSESVSPTPGQTSMSTPRTLRKPGRIPAATPEEPW) form a disordered region. The segment covering 484-499 (ESVSPTPGQTSMSTPR) has biased composition (polar residues). The 69-residue stretch at 745–813 (PDLHFVLDSG…LHGCRGCGAA (69 aa)) folds into the BTB domain.

As to quaternary structure, substrate-recognition component of the BCR(ARMC5) E3 ubiquitin ligase complex, at least composed of CUL3, ARMC5 and RBX1. Ubiquitinated by a BCR (BTB-CUL3-RBX1) E3 ubiquitin ligase complex, leading to its degradation. Deubiquitinated by USP7. In terms of tissue distribution, expression is high in the thymus, stomach, bone marrow and lymphatic tissues (including lymph nodes and intestinal wall). Also expressed in the adrenal gland, skin and in brain structures, with noticeable levels found in the cerebellum.

It is found in the nucleus. Its subcellular location is the chromosome. The protein localises to the cytoplasm. It functions in the pathway protein modification; protein ubiquitination. In terms of biological role, substrate-recognition component of a BCR (BTB-CUL3-RBX1) E3 ubiquitin ligase complex that terminates RNA polymerase II (Pol II) transcription in the promoter-proximal region of genes. The BCR(ARMC5) complex provides a quality checkpoint during transcription elongation by driving premature transcription termination of transcripts that are unfavorably configured for transcriptional elongation: the BCR(ARMC5) complex acts by mediating ubiquitination of Pol II subunit POLR2A phosphorylated at 'Ser-5' of the C-terminal domain (CTD), leading to POLR2A degradation. The BCR(ARMC5) complex acts in parallel of the integrator complex and is specific for RNA Pol II originating from the promoter-proximal zone: it does not ubiquitinate elongation-stalled RNA Pol II. The BCR(ARMC5) complex also acts as a regulator of fatty acid desaturation by mediating ubiquitination and degradation of SCAP-free SREBF1 and SREBF2. Involved in fetal development, T-cell function and adrenal gland growth homeostasis. Plays a role in steroidogenesis, modulates steroidogenic enzymes expression and cortisol production. This is Armadillo repeat-containing protein 5 from Mus musculus (Mouse).